Here is a 696-residue protein sequence, read N- to C-terminus: Polyribonucleotide nucleotidyltransferase (696 aa).

Residues Asp489 and Asp495 each coordinate Mg(2+). The region spanning 556-615 (PQYVTMKINPEKIRDVIGKGGVVIREITEATNCAIDISDDGTIKIAAHTTEEGEAAKRRI) is the KH domain. Positions 625-693 (GKVYEGTVVK…RQGRVRLSMK (69 aa)) constitute an S1 motif domain.

It belongs to the polyribonucleotide nucleotidyltransferase family. Component of the RNA degradosome, which is a multiprotein complex involved in RNA processing and mRNA degradation. The cofactor is Mg(2+).

It localises to the cytoplasm. It carries out the reaction RNA(n+1) + phosphate = RNA(n) + a ribonucleoside 5'-diphosphate. Its function is as follows. Involved in mRNA degradation. Catalyzes the phosphorolysis of single-stranded polyribonucleotides processively in the 3'- to 5'-direction. The protein is Polyribonucleotide nucleotidyltransferase of Coxiella burnetii (strain CbuG_Q212) (Coxiella burnetii (strain Q212)).